A 377-amino-acid polypeptide reads, in one-letter code: tRNA 2-selenouridine synthase (377 aa).

The region spanning 18–141 (ITRGVTLIDV…LRQEAMDATD (124 aa)) is the Rhodanese domain. Cys-101 (S-selanylcysteine intermediate) is an active-site residue.

This sequence belongs to the SelU family. As to quaternary structure, monomer.

It carries out the reaction 5-methylaminomethyl-2-thiouridine(34) in tRNA + selenophosphate + (2E)-geranyl diphosphate + H2O + H(+) = 5-methylaminomethyl-2-selenouridine(34) in tRNA + (2E)-thiogeraniol + phosphate + diphosphate. The enzyme catalyses 5-methylaminomethyl-2-thiouridine(34) in tRNA + (2E)-geranyl diphosphate = 5-methylaminomethyl-S-(2E)-geranyl-thiouridine(34) in tRNA + diphosphate. It catalyses the reaction 5-methylaminomethyl-S-(2E)-geranyl-thiouridine(34) in tRNA + selenophosphate + H(+) = 5-methylaminomethyl-2-(Se-phospho)selenouridine(34) in tRNA + (2E)-thiogeraniol. The catalysed reaction is 5-methylaminomethyl-2-(Se-phospho)selenouridine(34) in tRNA + H2O = 5-methylaminomethyl-2-selenouridine(34) in tRNA + phosphate. Its function is as follows. Involved in the post-transcriptional modification of the uridine at the wobble position (U34) of tRNA(Lys), tRNA(Glu) and tRNA(Gln). Catalyzes the conversion of 2-thiouridine (S2U-RNA) to 2-selenouridine (Se2U-RNA). Acts in a two-step process involving geranylation of 2-thiouridine (S2U) to S-geranyl-2-thiouridine (geS2U) and subsequent selenation of the latter derivative to 2-selenouridine (Se2U) in the tRNA chain. The polypeptide is tRNA 2-selenouridine synthase (Cronobacter sakazakii (strain ATCC BAA-894) (Enterobacter sakazakii)).